We begin with the raw amino-acid sequence, 621 residues long: Probable potassium transport system protein Kup 2 (621 aa).

Helical transmembrane passes span 9–29 (MAGLTLAALGVVYGDIGTSPL), 48–68 (IFGILSLIFWSLIFVVSVKYV), 101–121 (IVLLGLFGAALFYGDAIITPA), 136–156 (SGMEAYVLPMAVGVLVGLFLL), 164–184 (VGLMFGPVMMVWFAILGILGL), 210–230 (GFHAFLTLGSVVLALTGAEAL), 246–266 (WFSLVLPGLGLNYFGQGALLM), 275–295 (PFFLLAPDWALLPMIALATLA), 336–356 (IYMPFINWALLVAVLVVVLTF), 364–384 (AAYGIAVTGTMLITTMLFFVV), 393–413 (LPLALGITLLFGVIDTAFFAA), and 418–438 (VADGGWLPLVMGMAIFTLMST).

It belongs to the HAK/KUP transporter (TC 2.A.72) family.

It is found in the cell inner membrane. It carries out the reaction K(+)(in) + H(+)(in) = K(+)(out) + H(+)(out). Functionally, transport of potassium into the cell. Likely operates as a K(+):H(+) symporter. The chain is Probable potassium transport system protein Kup 2 from Chromobacterium violaceum (strain ATCC 12472 / DSM 30191 / JCM 1249 / CCUG 213 / NBRC 12614 / NCIMB 9131 / NCTC 9757 / MK).